The sequence spans 382 residues: Lipid-A-disaccharide synthase (382 aa).

It belongs to the LpxB family.

The enzyme catalyses 2-N,3-O-bis[(3R)-3-hydroxytetradecanoyl]-alpha-D-glucosaminyl 1-phosphate + UDP-2-N,3-O-bis[(3R)-3-hydroxytetradecanoyl]-alpha-D-glucosamine = lipid A disaccharide (E. coli) + UDP + H(+). The catalysed reaction is a lipid X + a UDP-2-N,3-O-bis[(3R)-3-hydroxyacyl]-alpha-D-glucosamine = a lipid A disaccharide + UDP + H(+). It participates in glycolipid biosynthesis; lipid IV(A) biosynthesis; lipid IV(A) from (3R)-3-hydroxytetradecanoyl-[acyl-carrier-protein] and UDP-N-acetyl-alpha-D-glucosamine: step 5/6. Its function is as follows. Condensation of UDP-2,3-diacylglucosamine and 2,3-diacylglucosamine-1-phosphate to form lipid A disaccharide, a precursor of lipid A, a phosphorylated glycolipid that anchors the lipopolysaccharide to the outer membrane of the cell. The sequence is that of Lipid-A-disaccharide synthase from Escherichia coli O7:K1 (strain IAI39 / ExPEC).